We begin with the raw amino-acid sequence, 337 residues long: Fructose-1,6-bisphosphatase class 1 (337 aa).

Residues Glu91, Asp113, Leu115, and Asp116 each coordinate Mg(2+). Substrate is bound by residues 116 to 119 (DGSS), Asn209, Tyr242, and Lys275. Mg(2+) is bound at residue Glu281.

Belongs to the FBPase class 1 family. In terms of assembly, homotetramer. Mg(2+) is required as a cofactor.

It localises to the cytoplasm. It catalyses the reaction beta-D-fructose 1,6-bisphosphate + H2O = beta-D-fructose 6-phosphate + phosphate. The protein operates within carbohydrate biosynthesis; gluconeogenesis. This is Fructose-1,6-bisphosphatase class 1 from Nitratidesulfovibrio vulgaris (strain DP4) (Desulfovibrio vulgaris).